A 378-amino-acid polypeptide reads, in one-letter code: tRNA-specific 2-thiouridylase MnmA (378 aa).

ATP is bound by residues 7–14 (GLSGGVDS) and Met-33. The interaction with target base in tRNA stretch occupies residues 102 to 104 (NPD). Catalysis depends on Cys-107, which acts as the Nucleophile. The cysteines at positions 107 and 209 are disulfide-linked. Gly-132 contributes to the ATP binding site. The tract at residues 159–161 (KDQ) is interaction with tRNA. Cys-209 serves as the catalytic Cysteine persulfide intermediate. The interval 316–317 (RY) is interaction with tRNA.

The protein belongs to the MnmA/TRMU family.

It localises to the cytoplasm. The catalysed reaction is S-sulfanyl-L-cysteinyl-[protein] + uridine(34) in tRNA + AH2 + ATP = 2-thiouridine(34) in tRNA + L-cysteinyl-[protein] + A + AMP + diphosphate + H(+). Catalyzes the 2-thiolation of uridine at the wobble position (U34) of tRNA, leading to the formation of s(2)U34. The polypeptide is tRNA-specific 2-thiouridylase MnmA (Aster yellows witches'-broom phytoplasma (strain AYWB)).